Here is a 329-residue protein sequence, read N- to C-terminus: Ribose-phosphate pyrophosphokinase B (329 aa).

Mg(2+)-binding residues include aspartate 131, histidine 133, and glutamate 146. The tract at residues 227–242 is binding of phosphoribosylpyrophosphate; it reads TGKIAIIIDDIADTCK.

The protein belongs to the ribose-phosphate pyrophosphokinase family. It depends on Mg(2+) as a cofactor.

The protein localises to the cytoplasm. The catalysed reaction is D-ribose 5-phosphate + ATP = 5-phospho-alpha-D-ribose 1-diphosphate + AMP + H(+). It functions in the pathway metabolic intermediate biosynthesis; 5-phospho-alpha-D-ribose 1-diphosphate biosynthesis; 5-phospho-alpha-D-ribose 1-diphosphate from D-ribose 5-phosphate (route I): step 1/1. This Dictyostelium discoideum (Social amoeba) protein is Ribose-phosphate pyrophosphokinase B (prsB).